The sequence spans 66 residues: DNA gyrase inhibitor YacG (66 aa).

C9, C12, C28, and C32 together coordinate Zn(2+). A disordered region spans residues 45 to 66 (HKIAGSEGSEDELYSGDLEPRH).

It belongs to the DNA gyrase inhibitor YacG family. In terms of assembly, interacts with GyrB. It depends on Zn(2+) as a cofactor.

Functionally, inhibits all the catalytic activities of DNA gyrase by preventing its interaction with DNA. Acts by binding directly to the C-terminal domain of GyrB, which probably disrupts DNA binding by the gyrase. In Pseudomonas putida (strain ATCC 700007 / DSM 6899 / JCM 31910 / BCRC 17059 / LMG 24140 / F1), this protein is DNA gyrase inhibitor YacG.